The following is a 227-amino-acid chain: Cytochrome c oxidase subunit 2 (227 aa).

Residues 1 to 14 (MAHRAQVGLQDATS) are Mitochondrial intermembrane-facing. Residues 15–45 (PIMEELVIFHDHALMIIFLICFLVLYALFLT) form a helical membrane-spanning segment. At 46-59 (LTTKLTNTNISDAQ) the chain is on the mitochondrial matrix side. The chain crosses the membrane as a helical span at residues 60 to 87 (EMETIWTTLPAIILILIALPSLRILYLT). The Mitochondrial intermembrane segment spans residues 88 to 227 (DEINDPSFTI…IFEMGPVFAL (140 aa)). 6 residues coordinate Cu cation: His161, Cys196, Glu198, Cys200, His204, and Met207. Residue Glu198 participates in Mg(2+) binding.

This sequence belongs to the cytochrome c oxidase subunit 2 family. Component of the cytochrome c oxidase (complex IV, CIV), a multisubunit enzyme composed of 14 subunits. The complex is composed of a catalytic core of 3 subunits MT-CO1, MT-CO2 and MT-CO3, encoded in the mitochondrial DNA, and 11 supernumerary subunits COX4I, COX5A, COX5B, COX6A, COX6B, COX6C, COX7A, COX7B, COX7C, COX8 and NDUFA4, which are encoded in the nuclear genome. The complex exists as a monomer or a dimer and forms supercomplexes (SCs) in the inner mitochondrial membrane with NADH-ubiquinone oxidoreductase (complex I, CI) and ubiquinol-cytochrome c oxidoreductase (cytochrome b-c1 complex, complex III, CIII), resulting in different assemblies (supercomplex SCI(1)III(2)IV(1) and megacomplex MCI(2)III(2)IV(2)). Found in a complex with TMEM177, COA6, COX18, COX20, SCO1 and SCO2. Interacts with TMEM177 in a COX20-dependent manner. Interacts with COX20. Interacts with COX16. The cofactor is Cu cation.

It localises to the mitochondrion inner membrane. It catalyses the reaction 4 Fe(II)-[cytochrome c] + O2 + 8 H(+)(in) = 4 Fe(III)-[cytochrome c] + 2 H2O + 4 H(+)(out). Component of the cytochrome c oxidase, the last enzyme in the mitochondrial electron transport chain which drives oxidative phosphorylation. The respiratory chain contains 3 multisubunit complexes succinate dehydrogenase (complex II, CII), ubiquinol-cytochrome c oxidoreductase (cytochrome b-c1 complex, complex III, CIII) and cytochrome c oxidase (complex IV, CIV), that cooperate to transfer electrons derived from NADH and succinate to molecular oxygen, creating an electrochemical gradient over the inner membrane that drives transmembrane transport and the ATP synthase. Cytochrome c oxidase is the component of the respiratory chain that catalyzes the reduction of oxygen to water. Electrons originating from reduced cytochrome c in the intermembrane space (IMS) are transferred via the dinuclear copper A center (CU(A)) of subunit 2 and heme A of subunit 1 to the active site in subunit 1, a binuclear center (BNC) formed by heme A3 and copper B (CU(B)). The BNC reduces molecular oxygen to 2 water molecules using 4 electrons from cytochrome c in the IMS and 4 protons from the mitochondrial matrix. The polypeptide is Cytochrome c oxidase subunit 2 (MT-CO2) (Pongo pygmaeus (Bornean orangutan)).